We begin with the raw amino-acid sequence, 409 residues long: Broad specificity amino-acid racemase (409 aa).

A signal peptide spans 1–24; sequence MPFRRTLLAASLALLITGQAPLYA. C71 and C97 are disulfide-bonded. K75 functions as the Proton acceptor in the catalytic mechanism. At K75 the chain carries N6-(pyridoxal phosphate)lysine. Residue R174 coordinates substrate. The active-site Proton acceptor is Y301. Residue M349 coordinates substrate.

The protein belongs to the alanine racemase family. Bsr subfamily. Pyridoxal 5'-phosphate is required as a cofactor.

The protein resides in the periplasm. The catalysed reaction is an L-alpha-amino acid = a D-alpha-amino acid. It catalyses the reaction L-lysine = D-lysine. It carries out the reaction L-arginine = D-arginine. The enzyme catalyses L-glutamine = D-glutamine. In terms of biological role, amino-acid racemase able to utilize a broad range of substrates. Reversibly racemizes 9 of the 19 natural chiral amino acids known, including both positively charged amino acids (Lys, Arg and His) and non-beta-branched aliphatic amino acids (Ala, Leu, Met, Ser, Gln and Asn). Among these amino acids, activity is the highest with lysine and arginine, and poor or very poor with the others. Plays a primary role in the catabolism of basic amino acid, that allows P.putida strain KT2440 to grow on L-Lys and L-Arg as the sole source of carbon and nitrogen, through conversion to their respective D-enantiomers. The polypeptide is Broad specificity amino-acid racemase (Pseudomonas putida (strain ATCC 47054 / DSM 6125 / CFBP 8728 / NCIMB 11950 / KT2440)).